The chain runs to 366 residues: Dehydrogenase aclE (366 aa).

The first 19 residues, 1–19 (MSKRIRLGIVGLSADPSHC), serve as a signal peptide directing secretion. The N-linked (GlcNAc...) asparagine glycan is linked to asparagine 330.

This sequence belongs to the Gfo/Idh/MocA family.

Its pathway is mycotoxin biosynthesis. In terms of biological role, dehydrogenase; part of the gene cluster that mediates the biosynthesis of aspirochlorine (or antibiotic A30641), an unusual halogenated spiro compound with distinctive antifungal properties due to selective inhibition of protein biosynthesis, and which is also active against bacteria, viruses, and murine tumor cells. The non-ribosomal peptide synthetase (NRPS) aclP is responsible the formation of the diketopiperazine (DKP) core from the condensation of 2 phenylalanine residues. One Phe residue is tailored into chlorotyrosine by hydroxylation and chlorination, whereas the second Phe undergoes an unprecedented C-C bond cleavage to be converted into glycine. After formation of the DKP, sulfur is incorporated into the DKP by conjugation with glutathione by aclG, followed by its stepwise degradation to the thiol by aclI, aclJ and aclK, and the dithiol oxidation by aclT. In addition, oxygenases (aclB, aclC, aclL and aclO) and O-methyltransferases (aclM and aclU) act as tailoring enzymes to produce the intermediate dechloroaspirochlorine. Ultimately, chlorination of dechloroaspirochlorine by the halogenase aclH is the last step in the aspirochlorine pathway. This chain is Dehydrogenase aclE, found in Aspergillus oryzae (strain ATCC 42149 / RIB 40) (Yellow koji mold).